A 334-amino-acid polypeptide reads, in one-letter code: Mediator of RNA polymerase II transcription subunit 4 (334 aa).

Residues 71–100 (QEREQLIRTLEAHVEKRDEVIQQLETNLKS) are a coiled coil. Residues 193–334 (PLITSPSASS…ASKKTGSSNK (142 aa)) form a disordered region. Composition is skewed to polar residues over residues 194–206 (LITSPSASSSNGG) and 251–282 (NEKQWQNPGVSGATSTQSPYNRVSQSPSSSPN).

This sequence belongs to the Mediator complex subunit 4 family. As to quaternary structure, component of the Mediator complex.

Its subcellular location is the nucleus. Component of the Mediator complex, a coactivator involved in the regulated transcription of nearly all RNA polymerase II-dependent genes. Mediator functions as a bridge to convey information from gene-specific regulatory proteins to the basal RNA polymerase II transcription machinery. Mediator is recruited to promoters by direct interactions with regulatory proteins and serves as a scaffold for the assembly of a functional preinitiation complex with RNA polymerase II and the general transcription factors. In Caenorhabditis elegans, this protein is Mediator of RNA polymerase II transcription subunit 4 (mdt-4).